The chain runs to 1139 residues: MNEDEAIQNITKKIEREKALINAANAMRSQTNNEAVRSPLDSQMRDGRRNLQFFEEKLRDIQLRKVGQGVEGMSLGADDAGRPPPPPKDASSAAWGDQAAYGQQSQVGPPSDLAPPRHNFGAPGPGAASKARPNFTKLDLIKYDTPYLGPRIQHMLSQIQFKLNVEEQYLKGVEKMVQLYGMEGDRKSKADAAARRVESKQKILLLKQALKRYEELHVDMDSADAQDDDSINTPNLRKPLSGQLSIRVVAIKDVDHATTGRFARGPETFVAVKVEDTVMARTKVSRNDRWEAEYHNMEVDKANEIELTIYDKPGEHPMPIAMLWVRISDIVEEMRRKRIEAEMNSSGWVSADRMGSTGAPSQFPMSPTSGSFGGSPQAPGGGQGQAPGPFGDPAPQPQVVTGPIDGWFNLEPAGQIQLEFSFVKENRDKRQVDLGLGRKGAVRQRKEEVHEMFGHKFVQHQFYNIMPCALCGDFLKYSAGMQCEDCKYTCHNKCYPSVVTKCISKSNAETDPDEEKINHRIPHRFQPFSNVTANWCCHCGYILPFGKKNCRKCSECGLTSHAQCVHLVPDFCGMSMAVANQILEGIRVQKQRQQKTTSLSEKTLRSGATKSPTTAGHGSSASFSSAGAGSVPGTPSAEATEAARLMYNQTSPQRPGQPGRAPSDLSAAAAASAAMAAAQGRTGYDSGPQDPYGQGHYGAAGPAPQHHKYNPADYANVDQGFPAQPPAQQRPPQPQQQQQAPPAQMPPQQPPPQQPLPPQPGQQYQQQQPAAQKPQPQPPATAQGAAAGPPGSQRKALPSATDPGTGARIGLDHFNFLAVLGKGNFGKVMLAETKRSKRLFAIKVLKKEFIIENDEVESIKSEKRVFLIANRERHPFLTNLHACFQTETRVYFVMEYISGGDLMLHIQRGQFGTKRAQFYAAEVCLALKYFHENGVIYRDLKLDNIMLTLDGHIKIADYGLCKEDMWYGSTTSTFCGTPEFMAPEILLDKKYGRAVDWWAFGVLIYQMLLQQSPFRGEDEDEIYDAILADEPLYPIHMPRDSVSILQKLLTREPDQRLGSGPTDAQEVMSQPFFRNINWDDIYHKRVQPPFLPQIKSATDTSNFDSEFTSVTPVLTPVQSVLSQAMQEEFRGFSYTADLD.

The 67-residue stretch at 1–67 (MNEDEAIQNI…LRDIQLRKVG (67 aa)) folds into the REM-1 1 domain. Residues 72–132 (GMSLGADDAG…PGPGAASKAR (61 aa)) form a disordered region. The REM-1 2 domain occupies 142–219 (KYDTPYLGPR…LKRYEELHVD (78 aa)). In terms of domain architecture, C2 spans 225 to 343 (AQDDDSINTP…MRRKRIEAEM (119 aa)). The interval 349-404 (VSADRMGSTGAPSQFPMSPTSGSFGGSPQAPGGGQGQAPGPFGDPAPQPQVVTGPI) is disordered. Over residues 358–368 (GAPSQFPMSPT) the composition is skewed to polar residues. 2 consecutive Phorbol-ester/DAG-type zinc fingers follow at residues 454-502 (GHKF…VTKC) and 522-572 (PHRF…PDFC). 3 disordered regions span residues 590-637 (KQRQ…TPSA), 649-668 (QTSP…LSAA), and 679-804 (QGRT…TDPG). Residues 594 to 614 (QKTTSLSEKTLRSGATKSPTT) show a composition bias toward polar residues. Low complexity predominate over residues 615–629 (AGHGSSASFSSAGAG). Pro residues-rich tracts occupy residues 723–734 (AQPPAQQRPPQP) and 743–760 (AQMP…PPQP). The span at 761–793 (GQQYQQQQPAAQKPQPQPPATAQGAAAGPPGSQ) shows a compositional bias: low complexity. The region spanning 814 to 1073 (FNFLAVLGKG…AQEVMSQPFF (260 aa)) is the Protein kinase domain. Residues 820–828 (LGKGNFGKV) and lysine 843 contribute to the ATP site. Aspartate 939 functions as the Proton acceptor in the catalytic mechanism. The AGC-kinase C-terminal domain maps to 1074–1139 (RNINWDDIYH…RGFSYTADLD (66 aa)).

This sequence belongs to the protein kinase superfamily. AGC Ser/Thr protein kinase family. PKC subfamily.

The catalysed reaction is L-seryl-[protein] + ATP = O-phospho-L-seryl-[protein] + ADP + H(+). It carries out the reaction L-threonyl-[protein] + ATP = O-phospho-L-threonyl-[protein] + ADP + H(+). Stimulated about twofold by phospholipids or phorbol esters. This Hypocrea jecorina (Trichoderma reesei) protein is Protein kinase C-like (pkc1).